We begin with the raw amino-acid sequence, 394 residues long: Elongation factor Tu (394 aa).

Residues 10–204 (KPHVNVGTIG…ALDRYIPTPE (195 aa)) enclose the tr-type G domain. A G1 region spans residues 19–26 (GHVDHGKT). 19 to 26 (GHVDHGKT) lines the GTP pocket. Residue Thr26 participates in Mg(2+) binding. Positions 60–64 (GITIN) are G2. The segment at 81–84 (DCPG) is G3. Residues 81-85 (DCPGH) and 136-139 (NKCD) contribute to the GTP site. Residues 136–139 (NKCD) form a G4 region. Residues 174–176 (SAL) form a G5 region.

This sequence belongs to the TRAFAC class translation factor GTPase superfamily. Classic translation factor GTPase family. EF-Tu/EF-1A subfamily. Monomer.

The protein localises to the cytoplasm. It catalyses the reaction GTP + H2O = GDP + phosphate + H(+). GTP hydrolase that promotes the GTP-dependent binding of aminoacyl-tRNA to the A-site of ribosomes during protein biosynthesis. The sequence is that of Elongation factor Tu from Neisseria gonorrhoeae.